Consider the following 419-residue polypeptide: MNVHQGSDGDWSLQPELSCLGDEALAATQEKEGSSLVSSGLHSVTYPLAARSEDLALDYASQPASLPHPHIMPLPEDNKGSCFQSGSKRSHEPFIVPERFGNSGLGFGGGAHSQAPEKVTLLVDGTRFVVNPQIFTAHPDTMLGRMFGPGREYNFTRPNEKGEYVIAEGISATVFRTVLDYYKTGIINCPDGISIPDLRDTCDYLCINFDFNTIRCQDLSALLHELSNDGAHKQFDHYLEELILPIMVGCAKKGERECHIVVLTDEDSVDWDEDHPPPMGEEYSQILYSSKLYRFFKYIENRDVAKTVLKERGLKNIRIGIEGYPTCKEKIKRRPGGRSEVIYNYVQRPFIQMSWEKEEGKSRHVDFQCVRSKSLTNLVAAGEDVLEDQEIIMHHPPQVDELDRLNAPLSQMAPNDFQD.

A BTB domain is found at 117–191 (EKVTLLVDGT…YKTGIINCPD (75 aa)).

Interacts with AKT1; AKT2 and AKT3. Interacts with PPP2CA and PPP1CA. Part of a complex containing MARK4. Ubiquitously expressed.

The protein localises to the cytoplasm. Its function is as follows. Promotes the phosphorylation of AKT family members. In Mus musculus (Mouse), this protein is BTB/POZ domain-containing protein KCTD20 (Kctd20).